We begin with the raw amino-acid sequence, 150 residues long: uncharacterized protein (150 aa).

The first 23 residues, 1–23 (MYSILIACLVLLLCLIIYVGHRA), serve as a signal peptide directing secretion.

Belongs to the asfivirus EP152R family.

It is found in the virion. This is an uncharacterized protein from African swine fever virus (isolate Tick/South Africa/Pretoriuskop Pr4/1996) (ASFV).